Consider the following 360-residue polypeptide: Glutaminyl-peptide cyclotransferase (360 aa).

An N-terminal signal peptide occupies residues 1 to 23 (MKYLKILIIVTIFFFLLINVINC). Residue asparagine 135 is glycosylated (N-linked (GlcNAc...) asparagine). Position 165 (aspartate 165) interacts with Zn(2+). The active-site Proton acceptor is glutamate 199. Glutamate 200 provides a ligand contact to Zn(2+). The active-site Proton acceptor is aspartate 251. Histidine 330 is a Zn(2+) binding site.

Belongs to the glutaminyl-peptide cyclotransferase family.

It is found in the secreted. It catalyses the reaction N-terminal L-glutaminyl-[peptide] = N-terminal 5-oxo-L-prolyl-[peptide] + NH4(+). In terms of biological role, responsible for the biosynthesis of pyroglutamyl peptides. Has a bias against acidic and tryptophan residues adjacent to the N-terminal glutaminyl residue and a lack of importance of chain length after the second residue. Also catalyzes N-terminal pyroglutamate formation. The polypeptide is Glutaminyl-peptide cyclotransferase (qpct) (Dictyostelium discoideum (Social amoeba)).